A 524-amino-acid polypeptide reads, in one-letter code: Cytochrome P450 4F1 (524 aa).

A helical transmembrane segment spans residues 15-35 (VAFPWQTLLLFGASWILAQIL). Residues Glu328 and Cys468 each contribute to the heme site.

It belongs to the cytochrome P450 family. Heme is required as a cofactor. In terms of tissue distribution, expressed in liver.

It is found in the endoplasmic reticulum membrane. It localises to the microsome membrane. The enzyme catalyses (5Z,8Z,11Z,14Z)-eicosatetraenoate + reduced [NADPH--hemoprotein reductase] + O2 = 20-hydroxy-(5Z,8Z,11Z,14Z)-eicosatetraenoate + oxidized [NADPH--hemoprotein reductase] + H2O + H(+). It catalyses the reaction 5-hydroxy-(6E,8Z,11Z,14Z)-eicosatetraenoate + reduced [NADPH--hemoprotein reductase] + O2 = 5,20-dihydroxy-(6E,8Z,11Z,14Z)-eicosatetraenoate + oxidized [NADPH--hemoprotein reductase] + H2O + H(+). The catalysed reaction is 8-hydroxy-(5Z,9E,11Z,14Z)-eicosatetraenoate + reduced [NADPH--hemoprotein reductase] + O2 = 8,20-dihydroxy-(5Z,9E,11Z,14Z)-eicosatetraenoate + oxidized [NADPH--hemoprotein reductase] + H2O + H(+). It carries out the reaction leukotriene B4 + reduced [NADPH--hemoprotein reductase] + O2 = 20-hydroxy-leukotriene B4 + oxidized [NADPH--hemoprotein reductase] + H2O + H(+). The enzyme catalyses 6-trans-leukotriene B4 + reduced [NADPH--hemoprotein reductase] + O2 = 20-hydroxy-6-trans-leukotriene B4 + oxidized [NADPH--hemoprotein reductase] + H2O + H(+). It catalyses the reaction lipoxin A4 + reduced [NADPH--hemoprotein reductase] + O2 = 20-hydroxy-lipoxin A4 + oxidized [NADPH--hemoprotein reductase] + H2O + H(+). Its function is as follows. A cytochrome P450 monooxygenase involved in the metabolism of arachidonic acid and its oxygenated derivatives. Mechanistically, uses molecular oxygen inserting one oxygen atom into a substrate, and reducing the second into a water molecule, with two electrons provided by NADPH via cytochrome P450 reductase (CPR; NADPH-ferrihemoprotein reductase). Participates in the conversion of arachidonic acid to omega-hydroxyeicosatetraenoic acid (20-HETE), a signaling molecule acting both as vasoconstrictive and natriuretic with overall effect on arterial blood pressure. May play a role in the oxidative inactivation of eicosanoids, including both pro-inflammatory and anti-inflammatory mediators such as leukotriene B4 (LTB4), lipoxin A4 (LXA4), and several HETEs. In Rattus norvegicus (Rat), this protein is Cytochrome P450 4F1.